The sequence spans 299 residues: Protease HtpX homolog (299 aa).

2 helical membrane passes run 7–24 (GILMAVMTALFLGVGALI) and 29–46 (GAIIALIVAALMNLFTFW). Zn(2+) is bound at residue His-130. Residue Glu-131 is part of the active site. A Zn(2+)-binding site is contributed by His-134. A run of 2 helical transmembrane segments spans residues 145-165 (VTATFAGAISMLANFAFFFGG) and 174-194 (PVGIVGTLALMILAPLAAGLV). Glu-203 contributes to the Zn(2+) binding site.

This sequence belongs to the peptidase M48B family. The cofactor is Zn(2+).

It is found in the cell inner membrane. The protein is Protease HtpX homolog of Cereibacter sphaeroides (strain ATCC 17025 / ATH 2.4.3) (Rhodobacter sphaeroides).